The following is a 170-amino-acid chain: MKTQRDGPSLGRWSLVLLLLGLVMPLAIVAQVLSYQEAVLRAIEGINQRSSDANLYRLLDLDPRPTMDGDPDTPKPVSFTVKETVCPRTTQKSPEDCDFKEDGLVKRCVGTVTLNQARDSFDISCDKDNRRFARLGKFFRKVKKKIGGGLKKIGQKIKDFLGNLVPRTAS.

The first 30 residues, 1-30, serve as a signal peptide directing secretion; it reads MKTQRDGPSLGRWSLVLLLLGLVMPLAIVA. A propeptide spans 31–131 (cathelin-like domain (CLD)); that stretch reads QVLSYQEAVL…DISCDKDNRR (101 aa). Intrachain disulfides connect Cys-86-Cys-97 and Cys-108-Cys-125. Residues 150–162 are active core; the sequence is LKKIGQKIKDFLG.

The protein belongs to the cathelicidin family. Monomer, homodimer or homotrimer (in vitro). Oligomerizes as tetra- or hexamer in solution (in vitro). Post-translationally, proteolytically cleaved by proteinase PRTN3 into antibacterial peptide LL-37. Proteolytically cleaved by cathepsin CTSG and neutrophil elastase ELANE. Resistant to proteolytic degradation in solution, and when bound to both zwitterionic (mimicking mammalian membranes) and negatively charged membranes (mimicking bacterial membranes). In terms of processing, after secretion onto the skin surface, the CAMP gene product is processed by a serine protease-dependent mechanism into multiple novel antimicrobial peptides distinct from and shorter than cathelicidin LL-37. These peptides show enhanced antimicrobial action, acquiring the ability to kill skin pathogens such as S.aureus, E.coli and C.albicans. These peptides have lost the ability to stimulate CXCL8/IL8 release from keratinocytes. The peptides act synergistically, killing bacteria at lower concentrations when present together, and maintain activity at increased salt condition.

The protein resides in the secreted. Its subcellular location is the vesicle. In terms of biological role, antimicrobial protein that is an integral component of the innate immune system. Binds to bacterial lipopolysaccharides (LPS). Acts via neutrophil N-formyl peptide receptors to enhance the release of CXCL2. Postsecretory processing generates multiple cathelicidin antimicrobial peptides with various lengths which act as a topical antimicrobial defense in sweat on skin. The unprocessed precursor form, cathelicidin antimicrobial peptide, inhibits the growth of Gram-negative E.coli and E.aerogenes with efficiencies comparable to that of the mature peptide LL-37 (in vitro). Its function is as follows. Antimicrobial peptide that is an integral component of the innate immune system. Binds to bacterial lipopolysaccharides (LPS). Causes membrane permeabilization by forming transmembrane pores (in vitro). Causes lysis of E.coli. Exhibits antimicrobial activity against Gram-negative bacteria such as P.aeruginosa, S.typhimurium, E.aerogenes, E.coli and P.syringae, Gram-positive bacteria such as L.monocytogenes, S.epidermidis, S.pyogenes and S.aureus, as well as vancomycin-resistant enterococci (in vitro). Exhibits antimicrobial activity against methicillin-resistant S.aureus, P.mirabilis, and C.albicans in low-salt media, but not in media containing 100 mM NaCl (in vitro). Forms chiral supramolecular assemblies with quinolone signal (PQS) molecules of P.aeruginosa, which may lead to interference of bacterial quorum signaling and perturbance of bacterial biofilm formation. May form supramolecular fiber-like assemblies on bacterial membranes. Induces cytokine and chemokine producation as well as TNF/TNFA and CSF2/GMCSF production in normal human keratinocytes. Exhibits hemolytic activity against red blood cells. Exhibits antimicrobial activity against E.coli and B.megaterium (in vitro). The sequence is that of Cathelicidin antimicrobial peptide from Chlorocebus aethiops (Green monkey).